The primary structure comprises 342 residues: 6-hydroxytryprostatin B O-methyltransferase (342 aa).

Asp-201 contacts S-adenosyl-L-methionine. His-244 acts as the Proton acceptor in catalysis.

This sequence belongs to the class I-like SAM-binding methyltransferase superfamily. Cation-independent O-methyltransferase family. As to quaternary structure, homodimer.

It catalyses the reaction 6-hydroxytryprostatin B + S-adenosyl-L-methionine = tryprostatin A + S-adenosyl-L-homocysteine + H(+). It functions in the pathway mycotoxin biosynthesis. Functionally, 6-hydroxytryprostatin B O-methyltransferase; part of the gene cluster that mediates the biosynthesis of fumitremorgins, indole alkaloids that carry not only intriguing chemical structures, but also interesting biological and pharmacological activities. The biosynthesis of fumitremorgin-type alkaloids begins by condensation of the two amino acids L-tryptophan and L-proline to brevianamide F, catalyzed by the non-ribosomal peptide synthetase ftmA. Brevianamide F is then prenylated by the prenyltransferase ftmPT1/ftmB in the presence of dimethylallyl diphosphate, resulting in the formation of tryprostatin B. The three cytochrome P450 monooxygenases, ftmP450-1/ftmC, ftmP450-2/ftmE and ftmP450-3/FtmG, are responsible for the conversion of tryprostatin B to 6-hydroxytryprostatin B, tryprostatin A to fumitremorgin C and fumitremorgin C to 12,13-dihydroxyfumitremorgin C, respectively. The putative methyltransferase ftmMT/ftmD is expected for the conversion of 6-hydroxytryprostatin B to tryprostatin A. FtmPT2/FtmH catalyzes the prenylation of 12,13-dihydroxyfumitre-morgin C in the presence of dimethylallyl diphosphate, resulting in the formation of fumitremorgin B. Fumitremorgin B is further converted to verruculogen by ftmOx1/ftmF via the insertion of an endoperoxide bond between the two prenyl moieties. In some fungal species, verruculogen is further converted to fumitremorgin A, but the enzymes involved in this step have not been identified yet. This Aspergillus fumigatus (strain ATCC MYA-4609 / CBS 101355 / FGSC A1100 / Af293) (Neosartorya fumigata) protein is 6-hydroxytryprostatin B O-methyltransferase.